Reading from the N-terminus, the 323-residue chain is Phospho-N-acetylmuramoyl-pentapeptide-transferase (323 aa).

A run of 9 helical transmembrane segments spans residues 3-23 (NILL…PALI), 52-72 (MGGL…SWVL), 77-97 (MLPT…LGMW), 121-141 (IVGA…MALH), 145-165 (IGNW…LVGF), 175-195 (LDGL…IVAW), 200-220 (INIA…LIFN), 226-248 (IFMG…ILLH), and 301-321 (IDLT…WVIL).

Belongs to the glycosyltransferase 4 family. MraY subfamily. The cofactor is Mg(2+).

Its subcellular location is the cell membrane. The catalysed reaction is UDP-N-acetyl-alpha-D-muramoyl-L-alanyl-gamma-D-glutamyl-L-lysyl-D-alanyl-D-alanine + di-trans,octa-cis-undecaprenyl phosphate = Mur2Ac(oyl-L-Ala-gamma-D-Glu-L-Lys-D-Ala-D-Ala)-di-trans,octa-cis-undecaprenyl diphosphate + UMP. Its pathway is cell wall biogenesis; peptidoglycan biosynthesis. Catalyzes the initial step of the lipid cycle reactions in the biosynthesis of the cell wall peptidoglycan: transfers peptidoglycan precursor phospho-MurNAc-pentapeptide from UDP-MurNAc-pentapeptide onto the lipid carrier undecaprenyl phosphate, yielding undecaprenyl-pyrophosphoryl-MurNAc-pentapeptide, known as lipid I. This Levilactobacillus brevis (strain ATCC 367 / BCRC 12310 / CIP 105137 / JCM 1170 / LMG 11437 / NCIMB 947 / NCTC 947) (Lactobacillus brevis) protein is Phospho-N-acetylmuramoyl-pentapeptide-transferase.